Reading from the N-terminus, the 449-residue chain is Trigger factor (449 aa).

A PPIase FKBP-type domain is found at Gly-162–Pro-243. Residues Gly-428–Phe-437 show a composition bias toward basic and acidic residues. The tract at residues Gly-428 to Ala-449 is disordered. Residues Gly-438–Ala-449 are compositionally biased toward acidic residues.

Belongs to the FKBP-type PPIase family. Tig subfamily.

The protein resides in the cytoplasm. The catalysed reaction is [protein]-peptidylproline (omega=180) = [protein]-peptidylproline (omega=0). Involved in protein export. Acts as a chaperone by maintaining the newly synthesized protein in an open conformation. Functions as a peptidyl-prolyl cis-trans isomerase. In Corynebacterium glutamicum (strain R), this protein is Trigger factor.